A 217-amino-acid polypeptide reads, in one-letter code: Small ribosomal subunit protein uS3 (217 aa).

Residues 40 to 110 (IRDLINKGFN…EVYINIHEVR (71 aa)) enclose the KH type-2 domain.

Belongs to the universal ribosomal protein uS3 family. As to quaternary structure, part of the 30S ribosomal subunit. Forms a tight complex with proteins S10 and S14.

Binds the lower part of the 30S subunit head. Binds mRNA in the 70S ribosome, positioning it for translation. The chain is Small ribosomal subunit protein uS3 from Rickettsia akari (strain Hartford).